The sequence spans 166 residues: NAD(P)H-quinone oxidoreductase subunit I, chloroplastic (166 aa).

4Fe-4S ferredoxin-type domains lie at 55–84 (GRIH…VDWK) and 95–124 (LNYS…MTEE). [4Fe-4S] cluster contacts are provided by cysteine 64, cysteine 67, cysteine 70, cysteine 74, cysteine 104, cysteine 107, cysteine 110, and cysteine 114.

It belongs to the complex I 23 kDa subunit family. As to quaternary structure, NDH is composed of at least 16 different subunits, 5 of which are encoded in the nucleus. [4Fe-4S] cluster serves as cofactor.

Its subcellular location is the plastid. The protein resides in the chloroplast thylakoid membrane. The catalysed reaction is a plastoquinone + NADH + (n+1) H(+)(in) = a plastoquinol + NAD(+) + n H(+)(out). It catalyses the reaction a plastoquinone + NADPH + (n+1) H(+)(in) = a plastoquinol + NADP(+) + n H(+)(out). In terms of biological role, NDH shuttles electrons from NAD(P)H:plastoquinone, via FMN and iron-sulfur (Fe-S) centers, to quinones in the photosynthetic chain and possibly in a chloroplast respiratory chain. The immediate electron acceptor for the enzyme in this species is believed to be plastoquinone. Couples the redox reaction to proton translocation, and thus conserves the redox energy in a proton gradient. This is NAD(P)H-quinone oxidoreductase subunit I, chloroplastic from Marshallia caespitosa (Barbara's buttons).